The sequence spans 160 residues: Large ribosomal subunit protein uL30m (160 aa).

The N-terminal 34 residues, 1–34 (MAGVLRSAFPRPPCRLQTVKKGAESLIGTEWIRH), are a transit peptide targeting the mitochondrion. The interval 44–64 (KVFQPKPEDHEKYGGDPQNPH) is disordered.

Belongs to the universal ribosomal protein uL30 family. Component of the mitochondrial ribosome large subunit (39S) which comprises a 16S rRNA and about 50 distinct proteins.

The protein resides in the mitochondrion. This chain is Large ribosomal subunit protein uL30m (Mrpl30), found in Mus musculus (Mouse).